The primary structure comprises 155 residues: Ribosomal RNA large subunit methyltransferase H (155 aa).

S-adenosyl-L-methionine is bound by residues Gly104 and 123-128; that span reads FGNITL.

It belongs to the RNA methyltransferase RlmH family. As to quaternary structure, homodimer.

Its subcellular location is the cytoplasm. The catalysed reaction is pseudouridine(1915) in 23S rRNA + S-adenosyl-L-methionine = N(3)-methylpseudouridine(1915) in 23S rRNA + S-adenosyl-L-homocysteine + H(+). Specifically methylates the pseudouridine at position 1915 (m3Psi1915) in 23S rRNA. This is Ribosomal RNA large subunit methyltransferase H from Mesoplasma florum (strain ATCC 33453 / NBRC 100688 / NCTC 11704 / L1) (Acholeplasma florum).